Consider the following 615-residue polypeptide: Translation initiation factor IF-2 (615 aa).

The region spanning 118 to 285 (KRPPIVTVMG…AILTLAEINE (168 aa)) is the tr-type G domain. Residues 127 to 134 (GHVDHGKT) are G1. 127 to 134 (GHVDHGKT) lines the GTP pocket. Positions 152–156 (GITQH) are G2. Residues 173–176 (DTPG) form a G3 region. GTP-binding positions include 173 to 177 (DTPGH) and 227 to 230 (NKMD). The interval 227–230 (NKMD) is G4. The segment at 263–265 (SAI) is G5.

This sequence belongs to the TRAFAC class translation factor GTPase superfamily. Classic translation factor GTPase family. IF-2 subfamily.

It is found in the cytoplasm. In terms of biological role, one of the essential components for the initiation of protein synthesis. Protects formylmethionyl-tRNA from spontaneous hydrolysis and promotes its binding to the 30S ribosomal subunits. Also involved in the hydrolysis of GTP during the formation of the 70S ribosomal complex. This is Translation initiation factor IF-2 from Mycoplasmoides gallisepticum (strain R(low / passage 15 / clone 2)) (Mycoplasma gallisepticum).